The primary structure comprises 439 residues: SH3 domain-containing protein 1 (439 aa).

Positions 32-263 constitute a BAR domain; it reads DAVVVDEEEL…MIAEEEAIGS (232 aa). A compositionally biased stretch (polar residues) spans 277 to 291; that stretch reads SLPQQEPNSNSSGEI. Residues 277–362 form a disordered region; the sequence is SLPQQEPNSN…SDDHHNHQLL (86 aa). Residues 318–358 are compositionally biased toward basic and acidic residues; that stretch reads SPKDEMKSSPQEETKSNHQKEIKSSPQEEIKKSNGSDDHHN. Positions 366 to 425 constitute an SH3 domain; that stretch reads DSYFLAKVVHPFDAQAPGELSLAVDDYVIVRQVAGTGWSEGEYKGKAGWFPSAYVEKQEK.

Interacts with the auxilin-like protein AUXI1. In terms of tissue distribution, highly expressed in flowers. Detected in seedlings, roots, leaves and stems.

The protein resides in the cytoplasmic vesicle. Its subcellular location is the clathrin-coated vesicle. It is found in the cell membrane. It localises to the golgi apparatus. The protein localises to the trans-Golgi network. The protein resides in the endoplasmic reticulum. In terms of biological role, lipid binding protein bound strongly to phosphatidic acid, phosphatidylinositol-4-phosphate and phosphatidylinositol-4,5-bisphosphate. Binds actin in vitro. Involved in trafficking and modification of clathrin-coated vesicles. The protein is SH3 domain-containing protein 1 (SH3P1) of Arabidopsis thaliana (Mouse-ear cress).